Here is a 723-residue protein sequence, read N- to C-terminus: Probable alpha-fucosidase A (723 aa).

An N-terminal signal peptide occupies residues 1 to 15 (MRSLVLLGMSSLATA). N-linked (GlcNAc...) asparagine glycans are attached at residues N77, N98, N117, N171, N194, N243, N334, N558, N566, and N595.

The protein belongs to the glycosyl hydrolase 95 family.

It localises to the secreted. It carries out the reaction an alpha-L-fucoside + H2O = L-fucose + an alcohol. In terms of biological role, alpha-fucosidase involved in degradation of fucosylated xyloglucans. Hydrolyzes alpha-1,2-linked fucose. The polypeptide is Probable alpha-fucosidase A (afcA) (Aspergillus oryzae (strain ATCC 42149 / RIB 40) (Yellow koji mold)).